Consider the following 333-residue polypeptide: Tetraacyldisaccharide 4'-kinase (333 aa).

ATP is bound at residue 60–67; that stretch reads TVGGTGKT.

This sequence belongs to the LpxK family.

It catalyses the reaction a lipid A disaccharide + ATP = a lipid IVA + ADP + H(+). It functions in the pathway glycolipid biosynthesis; lipid IV(A) biosynthesis; lipid IV(A) from (3R)-3-hydroxytetradecanoyl-[acyl-carrier-protein] and UDP-N-acetyl-alpha-D-glucosamine: step 6/6. Functionally, transfers the gamma-phosphate of ATP to the 4'-position of a tetraacyldisaccharide 1-phosphate intermediate (termed DS-1-P) to form tetraacyldisaccharide 1,4'-bis-phosphate (lipid IVA). The polypeptide is Tetraacyldisaccharide 4'-kinase (Azotobacter vinelandii (strain DJ / ATCC BAA-1303)).